Consider the following 169-residue polypeptide: Zinc metalloproteinase-disintegrin-like mikarin (169 aa).

The Peptidase M12B domain maps to Lys-14–Pro-57. Positions Pro-65–Lys-129 constitute a Disintegrin domain. Cystine bridges form between Cys-68–Cys-97, Cys-79–Cys-92, Cys-81–Cys-87, Cys-105–Cys-111, Cys-110–Cys-123, and Cys-150–Cys-161. A D/ECD-tripeptide motif is present at residues Asp-116 to Asp-118.

It belongs to the venom metalloproteinase (M12B) family. P-III subfamily. P-IIIa sub-subfamily. Monomer. It depends on Zn(2+) as a cofactor. As to expression, expressed by the venom gland.

It localises to the secreted. With respect to regulation, inhibited by EDTA, but not by PMSF. Functionally, snake venom zinc metalloproteinase that calcium-independently catalyzes the conversion of prothrombin (F2) to alpha-thrombin through the formation of a thrombin intermediate. This Micropechis ikaheca (New Guinean small-eyed snake) protein is Zinc metalloproteinase-disintegrin-like mikarin.